The chain runs to 232 residues: Phosphatidylserine decarboxylase proenzyme (232 aa).

The Schiff-base intermediate with substrate; via pyruvic acid role is filled by S190. The residue at position 190 (S190) is a Pyruvic acid (Ser); by autocatalysis.

The protein belongs to the phosphatidylserine decarboxylase family. PSD-A subfamily. Heterodimer of a large membrane-associated beta subunit and a small pyruvoyl-containing alpha subunit. The cofactor is pyruvate. Is synthesized initially as an inactive proenzyme. Formation of the active enzyme involves a self-maturation process in which the active site pyruvoyl group is generated from an internal serine residue via an autocatalytic post-translational modification. Two non-identical subunits are generated from the proenzyme in this reaction, and the pyruvate is formed at the N-terminus of the alpha chain, which is derived from the carboxyl end of the proenzyme. The post-translation cleavage follows an unusual pathway, termed non-hydrolytic serinolysis, in which the side chain hydroxyl group of the serine supplies its oxygen atom to form the C-terminus of the beta chain, while the remainder of the serine residue undergoes an oxidative deamination to produce ammonia and the pyruvoyl prosthetic group on the alpha chain.

Its subcellular location is the cell membrane. It carries out the reaction a 1,2-diacyl-sn-glycero-3-phospho-L-serine + H(+) = a 1,2-diacyl-sn-glycero-3-phosphoethanolamine + CO2. It functions in the pathway phospholipid metabolism; phosphatidylethanolamine biosynthesis; phosphatidylethanolamine from CDP-diacylglycerol: step 2/2. Its function is as follows. Catalyzes the formation of phosphatidylethanolamine (PtdEtn) from phosphatidylserine (PtdSer). The chain is Phosphatidylserine decarboxylase proenzyme from Rhodopseudomonas palustris (strain HaA2).